The following is a 378-amino-acid chain: Cobalt-precorrin-5B C(1)-methyltransferase (378 aa).

It belongs to the CbiD family.

The enzyme catalyses Co-precorrin-5B + S-adenosyl-L-methionine = Co-precorrin-6A + S-adenosyl-L-homocysteine. It participates in cofactor biosynthesis; adenosylcobalamin biosynthesis; cob(II)yrinate a,c-diamide from sirohydrochlorin (anaerobic route): step 6/10. Catalyzes the methylation of C-1 in cobalt-precorrin-5B to form cobalt-precorrin-6A. This is Cobalt-precorrin-5B C(1)-methyltransferase from Thermoplasma volcanium (strain ATCC 51530 / DSM 4299 / JCM 9571 / NBRC 15438 / GSS1).